A 283-amino-acid polypeptide reads, in one-letter code: Non-selective voltage-gated ion channel VDAC3 (283 aa).

Cys2 carries the N-acetylcysteine modification. Thr4 is modified (phosphothreonine). Lys12, Lys15, and Lys20 each carry N6-acetyllysine. A run of 2 beta stranded transmembrane segments spans residues 26–35 (MVKIDLRTKS) and 39–47 (VEFSTSGHA). A Glycyl lysine isopeptide (Lys-Gly) (interchain with G-Cter in ubiquitin) cross-link involves residue Lys53. 3 beta stranded membrane-spanning segments follow: residues 54–64 (ASGNLETKYKI), 69–76 (LTFTQKWN), and 80–89 (TLGTEISLEN). Position 90 is an N6-acetyllysine (Lys90). A beta stranded transmembrane segment spans residues 95 to 104 (LKLTLDTIFV). Residues Lys109 and Lys110 each participate in a glycyl lysine isopeptide (Lys-Gly) (interchain with G-Cter in ubiquitin) cross-link. 10 beta stranded membrane-spanning segments follow: residues 111-120 (SGKLKASYKR), 123-130 (FSIGSNVD), 137-145 (TIYGWAVLA), 150-158 (LAGYQMSFD), 163-175 (KLSQ…GYKA), 178-185 (FQLHTHVN), 189-198 (EFGGSIYQKV), 202-211 (IETSINLAWT), 218-227 (RFGIAAKYKL), and 231-238 (TSLSAKVN). Position 241 is a phosphoserine (Ser241). Residues 242–244 (LIG) and 260–264 (SALID) each bind NAD(+). Transmembrane regions (beta stranded) follow at residues 242–251 (LIGLGYTQTL) and 254–263 (GVKLTLSALI). Lys266 is modified (N6-acetyllysine; alternate). Residue Lys266 forms a Glycyl lysine isopeptide (Lys-Gly) (interchain with G-Cter in ubiquitin); alternate linkage. A beta stranded transmembrane segment spans residues 273–282 (HKVGLGFELE).

This sequence belongs to the eukaryotic mitochondrial porin family. Interacts with ARMC12 in a TBC1D21-dependent manner. Interacts with MISFA. Post-translationally, ubiquitinated by PRKN during mitophagy, leading to its degradation and enhancement of mitophagy. Deubiquitinated by USP30.

It localises to the mitochondrion outer membrane. The protein resides in the membrane. The catalysed reaction is chloride(in) = chloride(out). It catalyses the reaction K(+)(in) = K(+)(out). Its function is as follows. Non-selective voltage-gated ion channel that mediates the transport of anions and cations through the mitochondrion outer membrane and plasma membrane. Forms a high-conducting channel with a stable open state and a voltage-induced closure with a mild preference for anions over cations. Involved in male fertility and sperm mitochondrial sheath formation. The chain is Non-selective voltage-gated ion channel VDAC3 from Sus scrofa (Pig).